The chain runs to 364 residues: UDP-arabinopyranose mutase 1 (364 aa).

The DXD motif motif lies at 110-112; that stretch reads DDD. A glycan (N-linked (Glc...) arginine) is linked at Arg158.

The protein belongs to the RGP family. Heteromers with UAM2 and UAM3. It depends on Mn(2+) as a cofactor. Mg(2+) is required as a cofactor. Post-translationally, reversibly glycosylated in vitro at Arg-158 by UDP-glucose. Reversibly glycosylated by UDP-xylose and UDP-galactose.

It is found in the golgi apparatus. The enzyme catalyses UDP-beta-L-arabinofuranose = UDP-beta-L-arabinopyranose. Functionally, UDP-L-arabinose mutase involved in the biosynthesis of cell wall non-cellulosic polysaccharides. Catalyzes the interconvertion of UDP-L-arabinopyranose (UDP-Arap) and UDP-L-arabinofuranose (UDP-Araf). Preferentially catalyzes the formation of UDP-Arap from UDP-Araf. At thermodynamic equilibrium in vitro the ratio of the pyranose form over the furanose form is 90:10. Is probably active as heteromer in vivo. The sequence is that of UDP-arabinopyranose mutase 1 from Oryza sativa subsp. japonica (Rice).